Consider the following 569-residue polypeptide: Protein AF-9 (569 aa).

In terms of domain architecture, YEATS spans methionine 1–alanine 138. The tract at residues alanine 138–asparagine 476 is disordered. Positions serine 149 to serine 190 are enriched in low complexity. The segment covering glutamate 202–alanine 265 has biased composition (basic and acidic residues). Phosphoserine is present on residues serine 289 and serine 295. Positions alanine 296–lysine 301 match the Nuclear localization signal motif. The span at serine 304–alanine 314 shows a compositional bias: low complexity. Basic and acidic residues predominate over residues alanine 323–lysine 350. Lysine 340 is covalently cross-linked (Glycyl lysine isopeptide (Lys-Gly) (interchain with G-Cter in SUMO2)). Residues aspartate 358–glutamate 369 show a composition bias toward acidic residues. The segment covering serine 372–serine 396 has biased composition (low complexity). A phosphoserine mark is found at serine 413 and serine 420. Over residues aspartate 415–serine 430 the composition is skewed to acidic residues. The span at valine 446–proline 462 shows a compositional bias: low complexity. A Phosphoserine modification is found at serine 484.

Component of the super elongation complex (SEC), at least composed of EAF1, EAF2, CDK9, MLLT3/AF9, AFF (AFF1 or AFF4), the P-TEFb complex and ELL (ELL, ELL2 or ELL3). Interacts with BCOR. Interacts with CBX8. Interacts with ALKBH4. As to expression, ubiquitously expressed. Strong expression in the spleen.

The protein resides in the nucleus. It is found in the chromosome. Functionally, chromatin reader component of the super elongation complex (SEC), a complex required to increase the catalytic rate of RNA polymerase II transcription by suppressing transient pausing by the polymerase at multiple sites along the DNA. Specifically recognizes and binds acylated histone H3, with a preference for histone H3 that is crotonylated. Crotonylation marks active promoters and enhancers and confers resistance to transcriptional repressors. Recognizes and binds histone H3 crotonylated at 'Lys-9' (H3K9cr), and with slightly lower affinity histone H3 crotonylated at 'Lys-18' (H3K18cr). Also recognizes and binds histone H3 acetylated and butyrylated at 'Lys-9' (H3K9ac and H3K9bu, respectively), but with lower affinity than crotonylated histone H3. In the SEC complex, MLLT3 is required to recruit the complex to crotonylated histones. Recruitment of the SEC complex to crotonylated histones promotes recruitment of DOT1L on active chromatin to deposit histone H3 'Lys-79' methylation (H3K79me). Plays a key role in hematopoietic stem cell (HSC) maintenance by preserving, rather than conferring, HSC stemness. Acts by binding to the transcription start site of active genes in HSCs and sustaining level of H3K79me2, probably by recruiting DOT1L. The protein is Protein AF-9 (Mllt3) of Mus musculus (Mouse).